Consider the following 416-residue polypeptide: Methylthioribose-1-phosphate isomerase (416 aa).

The active-site Proton donor is Asp-280.

It belongs to the eIF-2B alpha/beta/delta subunits family. MtnA subfamily.

The protein localises to the cytoplasm. Its subcellular location is the nucleus. The catalysed reaction is 5-(methylsulfanyl)-alpha-D-ribose 1-phosphate = 5-(methylsulfanyl)-D-ribulose 1-phosphate. It participates in amino-acid biosynthesis; L-methionine biosynthesis via salvage pathway; L-methionine from S-methyl-5-thio-alpha-D-ribose 1-phosphate: step 1/6. Catalyzes the interconversion of methylthioribose-1-phosphate (MTR-1-P) into methylthioribulose-1-phosphate (MTRu-1-P). The protein is Methylthioribose-1-phosphate isomerase of Candida albicans (strain SC5314 / ATCC MYA-2876) (Yeast).